A 493-amino-acid polypeptide reads, in one-letter code: NAD(P)H dehydrogenase (quinone) (493 aa).

Residues Pro-12–Ala-13, Asp-35–Asp-37, Ala-42–Ala-43, Lys-52, Gly-117, Asp-317, Leu-324–Ala-325, and Tyr-450 contribute to the FAD site.

It belongs to the class-I pyridine nucleotide-disulfide oxidoreductase family. Homotetramer. FAD is required as a cofactor.

It catalyses the reaction a quinone + NADH + H(+) = a quinol + NAD(+). The catalysed reaction is a quinone + NADPH + H(+) = a quinol + NADP(+). Functionally, may contribute to virulence by increasing resistance to reactive oxygen intermediates. It can reduce 2,6-dimethyl-1,4-benzoquinone (DMBQ), 5-hydroxy-1,4-naphthaquinone (5-HNQ) and menadione. The sequence is that of NAD(P)H dehydrogenase (quinone) (lpdA) from Mycobacterium tuberculosis (strain CDC 1551 / Oshkosh).